Consider the following 229-residue polypeptide: Trypsin (229 aa).

The propeptide at 1–7 (APDDDDK) is activation peptide. Positions 8–227 (IVGGYECPKH…YVSWIHETIA (220 aa)) constitute a Peptidase S1 domain. Cystine bridges form between Cys14–Cys143, Cys32–Cys48, Cys116–Cys216, Cys123–Cys189, Cys154–Cys168, and Cys179–Cys203. His47 (charge relay system) is an active-site residue. Residues Glu59 and Glu69 each contribute to the Ca(2+) site. Asp91 acts as the Charge relay system in catalysis. Catalysis depends on Ser183, which acts as the Charge relay system.

Belongs to the peptidase S1 family. Ca(2+) serves as cofactor.

It localises to the secreted. The protein localises to the extracellular space. The enzyme catalyses Preferential cleavage: Arg-|-Xaa, Lys-|-Xaa.. The polypeptide is Trypsin (Squalus acanthias (Spiny dogfish)).